Consider the following 421-residue polypeptide: Probable 26S proteasome regulatory subunit rpn6 (421 aa).

The PCI domain maps to 221 to 390 (DFKTAYSYFY…GCLIVYDEPQ (170 aa)).

The protein belongs to the proteasome subunit S9 family. As to quaternary structure, component of the lid subcomplex of the 19S proteasome regulatory particle complex (also named PA700 complex). The 26S proteasome consists of a 20S proteasome core and two 19S regulatory subunits.

Functionally, component of the lid subcomplex of the 26S proteasome, a multiprotein complex involved in the ATP-dependent degradation of ubiquitinated proteins. In the complex, rpn6 is required for proteasome assembly. This Schizosaccharomyces pombe (strain 972 / ATCC 24843) (Fission yeast) protein is Probable 26S proteasome regulatory subunit rpn6 (rpn6).